A 437-amino-acid polypeptide reads, in one-letter code: Cobyrinate a,c-diamide synthase (437 aa).

The region spanning 241 to 430 (KIAVAKDEAF…AHVHFFGNLD (190 aa)) is the GATase cobBQ-type domain. Cys323 acts as the Nucleophile in catalysis.

This sequence belongs to the CobB/CbiA family. It depends on Mg(2+) as a cofactor.

It carries out the reaction cob(II)yrinate + 2 L-glutamine + 2 ATP + 2 H2O = cob(II)yrinate a,c diamide + 2 L-glutamate + 2 ADP + 2 phosphate + 2 H(+). Its pathway is cofactor biosynthesis; adenosylcobalamin biosynthesis; cob(II)yrinate a,c-diamide from sirohydrochlorin (anaerobic route): step 10/10. Functionally, catalyzes the ATP-dependent amidation of the two carboxylate groups at positions a and c of cobyrinate, using either L-glutamine or ammonia as the nitrogen source. This chain is Cobyrinate a,c-diamide synthase, found in Clostridium acetobutylicum (strain ATCC 824 / DSM 792 / JCM 1419 / IAM 19013 / LMG 5710 / NBRC 13948 / NRRL B-527 / VKM B-1787 / 2291 / W).